The chain runs to 178 residues: Large ribosomal subunit protein bL25 (178 aa).

This sequence belongs to the bacterial ribosomal protein bL25 family. CTC subfamily. As to quaternary structure, part of the 50S ribosomal subunit; part of the 5S rRNA/L5/L18/L25 subcomplex. Contacts the 5S rRNA. Binds to the 5S rRNA independently of L5 and L18.

Functionally, this is one of the proteins that binds to the 5S RNA in the ribosome where it forms part of the central protuberance. The protein is Large ribosomal subunit protein bL25 of Helicobacter pylori (strain Shi470).